The sequence spans 545 residues: Glucose-6-phosphate isomerase (545 aa).

The active-site Proton donor is the Glu351. Active-site residues include His382 and Lys510.

Belongs to the GPI family.

The protein resides in the cytoplasm. It catalyses the reaction alpha-D-glucose 6-phosphate = beta-D-fructose 6-phosphate. The protein operates within carbohydrate biosynthesis; gluconeogenesis. It functions in the pathway carbohydrate degradation; glycolysis; D-glyceraldehyde 3-phosphate and glycerone phosphate from D-glucose: step 2/4. In terms of biological role, catalyzes the reversible isomerization of glucose-6-phosphate to fructose-6-phosphate. This Shewanella pealeana (strain ATCC 700345 / ANG-SQ1) protein is Glucose-6-phosphate isomerase.